Here is a 210-residue protein sequence, read N- to C-terminus: Ribosomal RNA small subunit methyltransferase G (210 aa).

Residues Gly-80, Leu-85, Val-131–Glu-132, and Arg-146 each bind S-adenosyl-L-methionine.

Belongs to the methyltransferase superfamily. RNA methyltransferase RsmG family.

It is found in the cytoplasm. It carries out the reaction guanosine(527) in 16S rRNA + S-adenosyl-L-methionine = N(7)-methylguanosine(527) in 16S rRNA + S-adenosyl-L-homocysteine. In terms of biological role, specifically methylates the N7 position of guanine in position 527 of 16S rRNA. This is Ribosomal RNA small subunit methyltransferase G from Pasteurella multocida (strain Pm70).